A 333-amino-acid chain; its full sequence is Cytochrome f (333 aa).

The first 37 residues, 1–37, serve as a signal peptide directing secretion; that stretch reads MRNSCKKARRTRPLKATIQALLVAIATMTFFFTSDIA. The Cytoplasmic segment spans residues 38 to 298; the sequence is LPQSAAAYPF…TEIVLQDPNR (261 aa). Heme-binding residues include Y45, C66, C69, and H70. Residues 299–319 form a helical membrane-spanning segment; that stretch reads VKWMIAFICLVMLAQLMLILK. The Lumenal, thylakoid segment spans residues 320-333; the sequence is KKQVEKVQAAEMNF.

It belongs to the cytochrome f family. The 4 large subunits of the cytochrome b6-f complex are cytochrome b6, subunit IV (17 kDa polypeptide, PetD), cytochrome f and the Rieske protein, while the 4 small subunits are PetG, PetL, PetM and PetN. The complex functions as a dimer. Heme serves as cofactor.

It is found in the cellular thylakoid membrane. In terms of biological role, component of the cytochrome b6-f complex, which mediates electron transfer between photosystem II (PSII) and photosystem I (PSI), cyclic electron flow around PSI, and state transitions. This chain is Cytochrome f (petA), found in Mastigocladus laminosus (Fischerella sp.).